The primary structure comprises 234 residues: Lactate utilization protein C 1 (234 aa).

It belongs to the LutC/YkgG family.

Is involved in L-lactate degradation and allows cells to grow with lactate as the sole carbon source. The chain is Lactate utilization protein C 1 from Bacillus mycoides (strain KBAB4) (Bacillus weihenstephanensis).